An 872-amino-acid polypeptide reads, in one-letter code: Alanine--tRNA ligase (872 aa).

Zn(2+) is bound by residues His567, His571, Cys669, and His673.

It belongs to the class-II aminoacyl-tRNA synthetase family. Zn(2+) is required as a cofactor.

Its subcellular location is the cytoplasm. The catalysed reaction is tRNA(Ala) + L-alanine + ATP = L-alanyl-tRNA(Ala) + AMP + diphosphate. Its function is as follows. Catalyzes the attachment of alanine to tRNA(Ala) in a two-step reaction: alanine is first activated by ATP to form Ala-AMP and then transferred to the acceptor end of tRNA(Ala). Also edits incorrectly charged Ser-tRNA(Ala) and Gly-tRNA(Ala) via its editing domain. The polypeptide is Alanine--tRNA ligase (Streptococcus pneumoniae serotype 2 (strain D39 / NCTC 7466)).